The sequence spans 410 residues: Argininosuccinate synthase (410 aa).

Residue 8–16 (AYSGGLDTS) coordinates ATP. Y86 is an L-citrulline binding site. ATP is bound at residue G116. Positions 118, 122, and 123 each coordinate L-aspartate. L-citrulline is bound at residue N122. L-citrulline-binding residues include R126, S174, E259, and Y271.

This sequence belongs to the argininosuccinate synthase family. Type 1 subfamily. As to quaternary structure, homotetramer.

The protein resides in the cytoplasm. The enzyme catalyses L-citrulline + L-aspartate + ATP = 2-(N(omega)-L-arginino)succinate + AMP + diphosphate + H(+). It functions in the pathway amino-acid biosynthesis; L-arginine biosynthesis; L-arginine from L-ornithine and carbamoyl phosphate: step 2/3. The polypeptide is Argininosuccinate synthase (Leuconostoc citreum (strain KM20)).